A 549-amino-acid chain; its full sequence is Cytoplasmic trehalase (549 aa).

Residues Arg168, 175-176 (WD), Asn212, 221-223 (RSQ), 292-294 (RDE), and Gly324 each bind substrate. Catalysis depends on proton donor/acceptor residues Asp326 and Glu509. Residue Glu525 participates in substrate binding.

The protein belongs to the glycosyl hydrolase 37 family. Monomer.

It is found in the cytoplasm. It catalyses the reaction alpha,alpha-trehalose + H2O = alpha-D-glucose + beta-D-glucose. The protein operates within glycan degradation; trehalose degradation; D-glucose from alpha,alpha-trehalose: step 1/1. Its function is as follows. Hydrolyzes trehalose to glucose. Could be involved, in cells returning to low osmolarity conditions, in the utilization of the accumulated cytoplasmic trehalose, which was synthesized in response to high osmolarity. The polypeptide is Cytoplasmic trehalase (Escherichia coli O157:H7).